The primary structure comprises 367 residues: uncharacterized protein (367 aa).

Helical transmembrane passes span 18–38, 239–259, 296–316, and 329–349; these read ILAL…GILG, VSYF…IGIG, ILGV…GYLI, and AIFY…ISAL.

This sequence belongs to the ABC-4 integral membrane protein family.

It is found in the cell membrane. This is an uncharacterized protein from Methanocaldococcus jannaschii (strain ATCC 43067 / DSM 2661 / JAL-1 / JCM 10045 / NBRC 100440) (Methanococcus jannaschii).